Reading from the N-terminus, the 361-residue chain is Nicotinate-nucleotide--dimethylbenzimidazole phosphoribosyltransferase (361 aa).

Glu-315 acts as the Proton acceptor in catalysis.

It belongs to the CobT family.

It catalyses the reaction 5,6-dimethylbenzimidazole + nicotinate beta-D-ribonucleotide = alpha-ribazole 5'-phosphate + nicotinate + H(+). The protein operates within nucleoside biosynthesis; alpha-ribazole biosynthesis; alpha-ribazole from 5,6-dimethylbenzimidazole: step 1/2. Its function is as follows. Catalyzes the synthesis of alpha-ribazole-5'-phosphate from nicotinate mononucleotide (NAMN) and 5,6-dimethylbenzimidazole (DMB). This Clostridium perfringens (strain ATCC 13124 / DSM 756 / JCM 1290 / NCIMB 6125 / NCTC 8237 / Type A) protein is Nicotinate-nucleotide--dimethylbenzimidazole phosphoribosyltransferase.